Here is a 307-residue protein sequence, read N- to C-terminus: Small ribosomal subunit biogenesis GTPase RsgA (307 aa).

The CP-type G domain occupies 78–240 (HKTAFGHLIA…VIDTPGIKEL (163 aa)). Residues 128 to 131 (NKSD) and 182 to 190 (GHSGVGKST) contribute to the GTP site. Residues Cys-264, Cys-269, His-271, and Cys-277 each contribute to the Zn(2+) site.

This sequence belongs to the TRAFAC class YlqF/YawG GTPase family. RsgA subfamily. As to quaternary structure, monomer. Associates with 30S ribosomal subunit, binds 16S rRNA. Zn(2+) serves as cofactor.

It is found in the cytoplasm. Its function is as follows. One of several proteins that assist in the late maturation steps of the functional core of the 30S ribosomal subunit. Helps release RbfA from mature subunits. May play a role in the assembly of ribosomal proteins into the subunit. Circularly permuted GTPase that catalyzes slow GTP hydrolysis, GTPase activity is stimulated by the 30S ribosomal subunit. In Cytophaga hutchinsonii (strain ATCC 33406 / DSM 1761 / CIP 103989 / NBRC 15051 / NCIMB 9469 / D465), this protein is Small ribosomal subunit biogenesis GTPase RsgA.